The sequence spans 173 residues: Translationally-controlled tumor protein homolog (173 aa).

In terms of domain architecture, TCTP spans M1 to V173.

Belongs to the TCTP family. In terms of tissue distribution, expressed by the venom gland.

The protein resides in the secreted. In terms of biological role, venom protein that causes edema, enhances vascular permeability and is likely related to the inflammatory activity of the venom. This is Translationally-controlled tumor protein homolog from Grammostola rosea (Chilean rose tarantula).